Here is an 89-residue protein sequence, read N- to C-terminus: UPF0223 protein BcerKBAB4_3787 (89 aa).

This sequence belongs to the UPF0223 family.

The chain is UPF0223 protein BcerKBAB4_3787 from Bacillus mycoides (strain KBAB4) (Bacillus weihenstephanensis).